The following is a 140-amino-acid chain: Large ribosomal subunit protein bL17 (140 aa).

Belongs to the bacterial ribosomal protein bL17 family. In terms of assembly, part of the 50S ribosomal subunit. Contacts protein L32.

This chain is Large ribosomal subunit protein bL17, found in Ruegeria pomeroyi (strain ATCC 700808 / DSM 15171 / DSS-3) (Silicibacter pomeroyi).